The chain runs to 266 residues: MRILITNDDGVHSPGLRLLYEFASPLGAVDVVAPESPKSATGLGITLHKPLRMYETDLCGFKAVATSGTPSDTIYLAAYGLGRRYDLVLSGINLGDNTSLQVILSSGTLGAAFQAALLGIPAVAYSLHAQDWEEVLKNREALEIMKAVVQKSAEFVLKYGLPHGVDVVSINFPRNMKRGVKAKLVRAAKFRFAQKVDRRVDPRGSSYYWLYGTDLAPEPDTDVYTVLVEGQIAVTPLTLDLNALNTDRKLDAEALAKLVRYINEAI.

Residues Asp-8, Asp-9, Ser-39, and Asn-93 each contribute to the a divalent metal cation site.

The protein belongs to the SurE nucleotidase family. Requires a divalent metal cation as cofactor.

The protein localises to the cytoplasm. The catalysed reaction is a ribonucleoside 5'-phosphate + H2O = a ribonucleoside + phosphate. Nucleotidase that shows phosphatase activity on nucleoside 5'-monophosphates. The sequence is that of 5'-nucleotidase SurE from Pyrobaculum arsenaticum (strain DSM 13514 / JCM 11321 / PZ6).